The sequence spans 660 residues: ATP-dependent zinc metalloprotease FtsH (660 aa).

The segment at 1-20 is disordered; sequence MMPSSQRPSPRGSRQSPSPD. Residues 1–24 lie on the Cytoplasmic side of the membrane; it reads MMPSSQRPSPRGSRQSPSPDQRGR. A helical membrane pass occupies residues 25–45; the sequence is IAFAILATLVVAVLLLTLFSH. At 46–118 the chain is on the extracellular side; it reads APSGQPLGYS…VQVSYITPGP (73 aa). A helical transmembrane segment spans residues 119–139; sequence GIASTIIEYVIFFGIFIGIWV. Residues 140 to 660 are Cytoplasmic-facing; sequence YLTRRTQGSV…ASHDDTDPVS (521 aa). Position 213–220 (213–220) interacts with ATP; sequence GPPGTGKT. Histidine 435 contacts Zn(2+). Glutamate 436 is an active-site residue. Residues histidine 439 and aspartate 511 each contribute to the Zn(2+) site.

The protein in the central section; belongs to the AAA ATPase family. It in the C-terminal section; belongs to the peptidase M41 family. In terms of assembly, homohexamer. Requires Zn(2+) as cofactor.

The protein resides in the cell membrane. Acts as a processive, ATP-dependent zinc metallopeptidase for both cytoplasmic and membrane proteins. Plays a role in the quality control of integral membrane proteins. The sequence is that of ATP-dependent zinc metalloprotease FtsH from Acidimicrobium ferrooxidans (strain DSM 10331 / JCM 15462 / NBRC 103882 / ICP).